The following is a 249-amino-acid chain: 23S rRNA (guanosine-2'-O-)-methyltransferase RlmB (249 aa).

S-adenosyl-L-methionine-binding residues include Gly197, Ile217, and Leu226.

The protein belongs to the class IV-like SAM-binding methyltransferase superfamily. RNA methyltransferase TrmH family. RlmB subfamily.

The protein localises to the cytoplasm. It carries out the reaction guanosine(2251) in 23S rRNA + S-adenosyl-L-methionine = 2'-O-methylguanosine(2251) in 23S rRNA + S-adenosyl-L-homocysteine + H(+). Specifically methylates the ribose of guanosine 2251 in 23S rRNA. This is 23S rRNA (guanosine-2'-O-)-methyltransferase RlmB from Ralstonia nicotianae (strain ATCC BAA-1114 / GMI1000) (Ralstonia solanacearum).